Consider the following 638-residue polypeptide: Pentatricopeptide repeat-containing protein At1g59720, chloroplastic/mitochondrial (638 aa).

A chloroplast and mitochondrion-targeting transit peptide spans M1–S40. PPR repeat units lie at residues T82–H112, S113–S148, D150–G184, D185–R215, S216–S246, D250–K280, D288–R318, D319–V353, N356–E390, and A392–K422. The segment at I427–N510 is type E motif. Residues G511–R541 are type E(+) motif. The tract at residues S542–W638 is type DYW motif.

It belongs to the PPR family. PCMP-H subfamily. As to quaternary structure, interacts with ORRM1. Interacts with VAR3/OZ1.

The protein localises to the plastid. It is found in the chloroplast. The protein resides in the mitochondrion. Its function is as follows. Involved in multiple sites RNA editing events in chloroplasts. Involved in the editing of the site 2 of ndhB (ndhB-2) and site 3 of ndhD (ndhD-3) transcripts, which are two plastid-encoded subunits of the chloroplast NAD(P)H dehydrogenase (NDH) complex. Required for the activity of the NDH complex of the photosynthetic electron transport chain. The sequence is that of Pentatricopeptide repeat-containing protein At1g59720, chloroplastic/mitochondrial (PCMP-H51) from Arabidopsis thaliana (Mouse-ear cress).